A 420-amino-acid polypeptide reads, in one-letter code: MIIVAHVLLILLGATEILQADLLPDEKISLLPPVNFTIKVTGLAQVLLQWKPNPDQEQRNVNLEYQVKINAPKEDDYETRITESKCVTILHKGFSASVRTILQNDHSLLASSWASAELHAPPGSPGTSIVNLTCTTNTTEDNYSRLRSYQVSLHCTWLVGTDAPEDTQYFLYYRYGSWTEECQEYSKDTLGRNIACWFPRTFILSKGRDWLAVLVNGSSKHSAIRPFDQLFALHAIDQINPPLNVTAEIEGTRLSIQWEKPVSAFPIHCFDYEVKIHNTRNGYLQIEKLMTNAFISIIDDLSKYDVQVRAAVSSMCREAGLWSEWSQPIYVGNDEHKPLREWFVIVIMATICFILLILSLICKICHLWIKLFPPIPAPKSNIKDLFVTTNYEKAGSSETEIEVICYIEKPGVETLEDSVF.

Residues 1–20 (MIIVAHVLLILLGATEILQA) form the signal peptide. Residues 21 to 342 (DLLPDEKISL…NDEHKPLREW (322 aa)) lie on the Extracellular side of the membrane. One can recognise a Fibronectin type-III 1 domain in the interval 32-123 (PPVNFTIKVT…ASAELHAPPG (92 aa)). Residues Asn-35 and Asn-131 are each glycosylated (N-linked (GlcNAc...) asparagine). Cystine bridges form between Cys-134–Cys-155 and Cys-182–Cys-196. Asn-216 and Asn-244 each carry an N-linked (GlcNAc...) asparagine glycan. Positions 241–334 (PPLNVTAEIE…WSQPIYVGND (94 aa)) constitute a Fibronectin type-III 2 domain. The cysteines at positions 269 and 316 are disulfide-linked. The WSXWS motif signature appears at 322-326 (WSEWS). A helical membrane pass occupies residues 343–362 (FVIVIMATICFILLILSLIC). The Cytoplasmic segment spans residues 363-420 (KICHLWIKLFPPIPAPKSNIKDLFVTTNYEKAGSSETEIEVICYIEKPGVETLEDSVF). The short motif at 371–379 (LFPPIPAPK) is the Box 1 motif element.

This sequence belongs to the type I cytokine receptor family. Type 5 subfamily. As to quaternary structure, interacts with IL5. Interacts with CSF2RB. Interacts with JAK2. Interacts with SDCBP. As to expression, expressed on eosinophils and basophils.

The protein resides in the membrane. Functionally, cell surface receptor that plays an important role in the survival, differentiation, and chemotaxis of eosinophils. Acts by forming a heterodimeric receptor with CSF2RB subunit and subsequently binding to interleukin-5. In unstimulated conditions, interacts constitutively with JAK2. Heterodimeric receptor activation leads to JAK2 stimulation and subsequent activation of the JAK-STAT pathway. The chain is Interleukin-5 receptor subunit alpha (IL5RA) from Homo sapiens (Human).